Consider the following 217-residue polypeptide: Cytidylate kinase (217 aa).

An ATP-binding site is contributed by 11–19; that stretch reads GPAGAGKST.

The protein belongs to the cytidylate kinase family. Type 1 subfamily.

It is found in the cytoplasm. The enzyme catalyses CMP + ATP = CDP + ADP. The catalysed reaction is dCMP + ATP = dCDP + ADP. This Clostridium perfringens (strain SM101 / Type A) protein is Cytidylate kinase.